The primary structure comprises 1448 residues: Probable serine/threonine-protein kinase irlB (1448 aa).

Over residues D412–D423 the composition is skewed to acidic residues. The interval D412 to N446 is disordered. Residues G428–N437 are compositionally biased toward low complexity. 3 coiled-coil regions span residues A666–N817, E887–K921, and E974–D1016. The interval N975–L1008 is disordered. Low complexity predominate over residues K978 to L1008. Residues R1027–F1293 enclose the Protein kinase domain. Residues L1033–L1041 and K1056 each bind ATP. D1151 acts as the Proton acceptor in catalysis. Positions L1296 to N1448 constitute a KEN domain.

Belongs to the protein kinase superfamily. Ser/Thr protein kinase family.

The catalysed reaction is L-seryl-[protein] + ATP = O-phospho-L-seryl-[protein] + ADP + H(+). The enzyme catalyses L-threonyl-[protein] + ATP = O-phospho-L-threonyl-[protein] + ADP + H(+). This is Probable serine/threonine-protein kinase irlB (irlB-1) from Dictyostelium discoideum (Social amoeba).